The chain runs to 325 residues: Basic membrane protein A (325 aa).

The signal sequence occupies residues 1–3; sequence FLS. Residue cysteine 4 is the site of N-palmitoyl cysteine attachment. A lipid anchor (S-diacylglycerol cysteine) is attached at cysteine 4.

It belongs to the BMP lipoprotein family. Monomer.

The protein localises to the cell inner membrane. Functionally, immunogenic protein. May be part of an ABC-type nucleoside uptake system involved in the purine salvage pathway. This Borreliella afzelii (Borrelia afzelii) protein is Basic membrane protein A (bmpA).